Consider the following 178-residue polypeptide: MDLINLLFVSFWFILPAYTANAMACIFGGGKPVDLNKNFIDQKRLIGNGVTYRGTFFGVFFGIVTAIIQYLVSNLGFKFILSFNFTLIEYVIIGFLLSFGALFGDMFGSFLKRRLGFKQGQSAPVLDQITFIVFALIFVSYYYLVPSKISITLLILSPVVHILSNIIAYKLGLKKVWW.

5 consecutive transmembrane segments (helical) span residues 7-27, 56-76, 91-111, 125-145, and 149-169; these read LFVS…ACIF, FFGV…SNLG, VIIG…GSFL, VLDQ…YYLV, and ISIT…IIAY.

It belongs to the CDP-archaeol synthase family. The cofactor is Mg(2+).

It is found in the cell membrane. The catalysed reaction is 2,3-bis-O-(geranylgeranyl)-sn-glycerol 1-phosphate + CTP + H(+) = CDP-2,3-bis-O-(geranylgeranyl)-sn-glycerol + diphosphate. Its pathway is membrane lipid metabolism; glycerophospholipid metabolism. Functionally, catalyzes the formation of CDP-2,3-bis-(O-geranylgeranyl)-sn-glycerol (CDP-archaeol) from 2,3-bis-(O-geranylgeranyl)-sn-glycerol 1-phosphate (DGGGP) and CTP. This reaction is the third ether-bond-formation step in the biosynthesis of archaeal membrane lipids. This Methanococcus vannielii (strain ATCC 35089 / DSM 1224 / JCM 13029 / OCM 148 / SB) protein is CDP-archaeol synthase.